The following is a 296-amino-acid chain: Protoheme IX farnesyltransferase (296 aa).

Transmembrane regions (helical) follow at residues 13 to 33, 35 to 55, 84 to 104, 107 to 127, 132 to 152, 162 to 182, 208 to 228, 229 to 249, and 264 to 284; these read IIFG…KGII, YPLF…GCVF, VTLI…YIAA, LAMW…SLYM, VYGT…GYCA, LILL…IAIF, ITLY…VGYA, GYKY…MALR, and FVFS…DFSV.

This sequence belongs to the UbiA prenyltransferase family. Protoheme IX farnesyltransferase subfamily.

The protein localises to the cell inner membrane. It carries out the reaction heme b + (2E,6E)-farnesyl diphosphate + H2O = Fe(II)-heme o + diphosphate. It functions in the pathway porphyrin-containing compound metabolism; heme O biosynthesis; heme O from protoheme: step 1/1. Functionally, converts heme B (protoheme IX) to heme O by substitution of the vinyl group on carbon 2 of heme B porphyrin ring with a hydroxyethyl farnesyl side group. The sequence is that of Protoheme IX farnesyltransferase from Edwardsiella ictaluri (strain 93-146).